The sequence spans 216 residues: Large ribosomal subunit protein uL24m (216 aa).

The transit peptide at Met1–Met9 directs the protein to the mitochondrion. The 34-residue stretch at Tyr56 to Asp89 folds into the KOW domain.

It belongs to the universal ribosomal protein uL24 family. Component of the mitochondrial ribosome large subunit (39S) which comprises a 16S rRNA and about 50 distinct proteins. In terms of tissue distribution, ubiquitous. Expressed at greater levels in the kidney, adipose tissue, muscle and liver than the brain, heart, ovary and lung.

It localises to the mitochondrion. This chain is Large ribosomal subunit protein uL24m (mrpl24), found in Xenopus laevis (African clawed frog).